A 55-amino-acid chain; its full sequence is UPF0391 membrane protein Sfum_0248 (55 aa).

A run of 2 helical transmembrane segments spans residues 4 to 24 and 28 to 48; these read WALI…GGII and AWIA…SLLS.

This sequence belongs to the UPF0391 family.

It is found in the cell membrane. The sequence is that of UPF0391 membrane protein Sfum_0248 from Syntrophobacter fumaroxidans (strain DSM 10017 / MPOB).